A 273-amino-acid chain; its full sequence is MGSTQSVSGTPARPLPRNKHVSRVADPRSPSAGIQRTPIQVESSPQPNPPAEQLNSLKQAQDPDPRSPTLGIARTPMKISGPDSQCPLVKELSEVFETEVSETEVSESISSPVLGLPQETPLSSELDLPPDPDPQVSLEDQLLPWSQTELNSKQVFAKEEAKQSTETMVSGQTSDKPSRDPETPQSSGSKRSRRKTNNKVLGRSPLTILQDDNSPGTLTLRQGKRPSALSENVKDLKEGVILGTGRFLKAGGGAWEQNEDHDKENQHFALMES.

2 disordered regions span residues 1 to 231 (MGST…ALSE) and 251 to 273 (GGGA…LMES). 2 positions are modified to phosphoserine: serine 29 and serine 31. Residues 32-45 (AGIQRTPIQVESSP) are compositionally biased toward polar residues. Threonine 37 carries the phosphothreonine modification. 2 positions are modified to phosphoserine: serine 44 and serine 67. A Phosphothreonine modification is found at threonine 75. Positions 90–124 (KELSEVFETEVSETEVSESISSPVLGLPQETPLSS) are F-box-like. Serine 93 is modified (phosphoserine). Over residues 94–105 (EVFETEVSETEV) the composition is skewed to acidic residues. Polar residues-rich tracts occupy residues 144-154 (PWSQTELNSKQ) and 164-175 (STETMVSGQTSD). Residue serine 204 is modified to Phosphoserine. Threonine 207 bears the Phosphothreonine mark. Over residues 210–220 (QDDNSPGTLTL) the composition is skewed to polar residues. Serine 214 carries the post-translational modification Phosphoserine. Threonine 217 carries the phosphothreonine modification. The short motif at 263–265 (KEN) is the KEN box element.

Interacts with SKP1. Part of a SCF (SKP1-cullin-F-box) protein ligase complex. Post-translationally, ubiquitinated and degraded by the APC/C-Cdh1 complex.

It localises to the cytoplasm. The protein localises to the cytosol. Its pathway is protein modification; protein ubiquitination. In terms of biological role, F-box-like protein which is required for entry into mitosis. Acts by participating in E3 ligase complexes that mediate the ubiquitination and degradation of WEE1 kinase at G2/M phase. This Rattus norvegicus (Rat) protein is Cell division cycle-associated protein 3 (Cdca3).